The primary structure comprises 120 residues: MSHRPERVAEAIKKEVADLIRNDIKDPRIGFVTITGVEVTRDLSFAKIFISVMGSDAHRQETLSILQKSAGYMRSEIGRRIKLRHAPELIFKLDTSLDHGTRIAEILHEINSQEAKPTHE.

This sequence belongs to the RbfA family. As to quaternary structure, monomer. Binds 30S ribosomal subunits, but not 50S ribosomal subunits or 70S ribosomes.

The protein localises to the cytoplasm. Its function is as follows. One of several proteins that assist in the late maturation steps of the functional core of the 30S ribosomal subunit. Associates with free 30S ribosomal subunits (but not with 30S subunits that are part of 70S ribosomes or polysomes). Required for efficient processing of 16S rRNA. May interact with the 5'-terminal helix region of 16S rRNA. The protein is Ribosome-binding factor A of Desulforamulus reducens (strain ATCC BAA-1160 / DSM 100696 / MI-1) (Desulfotomaculum reducens).